The following is a 97-amino-acid chain: Acylphosphatase (97 aa).

One can recognise an Acylphosphatase-like domain in the interval lysine 3–tyrosine 97. Catalysis depends on residues arginine 18 and asparagine 36.

The protein belongs to the acylphosphatase family.

The enzyme catalyses an acyl phosphate + H2O = a carboxylate + phosphate + H(+). The protein is Acylphosphatase (acyP) of Lactococcus lactis subsp. lactis (strain IL1403) (Streptococcus lactis).